The following is a 255-amino-acid chain: 3-hydroxyacyl-CoA dehydrogenase type-2 (255 aa).

Positions 14, 16, 35, 58, 59, and 85 each coordinate NAD(+). Serine 149 serves as a coordination point for substrate. NAD(+)-binding residues include tyrosine 162, lysine 166, phenylalanine 195, and threonine 197. Tyrosine 162 acts as the Proton acceptor in catalysis.

Belongs to the short-chain dehydrogenases/reductases (SDR) family. As to quaternary structure, component of mitochondrial ribonuclease P, a complex composed of rswl/MRPP1, scu/MRPP2 and mldr/MRPP3. As to expression, found in many tissues including CNS, imaginal disks and salivary glands. Highest expression in both embryonic gonadal primordia and mature ovaries and testes.

It is found in the mitochondrion. It carries out the reaction a (3S)-3-hydroxyacyl-CoA + NAD(+) = a 3-oxoacyl-CoA + NADH + H(+). It catalyses the reaction (3S)-3-hydroxybutanoyl-CoA + NAD(+) = acetoacetyl-CoA + NADH + H(+). The enzyme catalyses testosterone + NAD(+) = androst-4-ene-3,17-dione + NADH + H(+). The catalysed reaction is 5alpha-androstane-3alpha,17beta-diol + NAD(+) = 17beta-hydroxy-5alpha-androstan-3-one + NADH + H(+). It carries out the reaction 17beta-estradiol + NAD(+) = estrone + NADH + H(+). It catalyses the reaction ursodeoxycholate + NAD(+) = 7-oxolithocholate + NADH + H(+). The enzyme catalyses 3beta,7beta-dihydroxy-5beta-cholan-24-oate + NAD(+) = 3beta-hydroxy-7-oxo-5beta-cholan-24-oate + NADH + H(+). The catalysed reaction is 11-dehydrocorticosterone + NAD(+) = pregn-4-ene-3,11,20,21-tetraone + NADH + H(+). It carries out the reaction cortisone + NAD(+) = 17alpha-hydroxypregn-4-en-3,11,20-trione-21-al + NADH + H(+). It catalyses the reaction cortisol + NAD(+) = 11beta,17alpha-dihydroxypregn-4-ene-3,20,21-trione + NADH + H(+). The enzyme catalyses 5alpha-pregnan-20beta-ol-3-one + NAD(+) = 5alpha-pregnane-3,20-dione + NADH + H(+). The catalysed reaction is 17beta-hydroxy-5alpha-androstan-3-one + NAD(+) = 5alpha-androstan-3,17-dione + NADH + H(+). Mitochondrial dehydrogenase involved in pathways of fatty acid, and steroid metabolism. Versatile enzyme presenting two types of activity; L-3-hydroxyacyl-CoA dehydrogenase ((3S)-3-hydroxyacyl-CoA dehydrogenase) activity and hydroxysteroid dehydrogenase (HSD) activity with a wide substrate spectrum. As a (3S)-3-hydroxyacyl-CoA dehydrogenase, it functions in the third step of the fatty acid beta-oxidation pathway, a major metabolic process in which fatty acids are oxidized to provide a significant source of energy, while also generating acyl-CoA metabolites used by many metabolic routes. As a HSD, it functions in the degradation pathways of glucocorticoids and sex steroids and epimerization of bile acids; catalyzes the beta-oxidation at position 17 of androgens and estrogens, has 3-alpha-hydroxysteroid dehydrogenase activity with androsterone, and carries out oxidative conversions of 7-beta-hydroxylated bile acids like ursodeoxycholate or isoursodeoxycholate (also known as 3-beta,7-beta-dihydroxy-5-beta-cholan-24-oate or 7-beta-hydroxyisolithocholate, respectively). Also exhibits 20-beta-OH and 21-OH dehydrogenase activities with C21 steroids. Essential for structural and functional integrity of mitochondria. Required for cell survival during embryonic development. May play a role in germline formation. Its function is as follows. In addition to mitochondrial dehydrogenase activity, moonlights as a component of mitochondrial ribonuclease P, a complex that cleaves tRNA molecules in their 5'-ends. Essential for the structural and functional integrity of mitochondria. Function is essential for pupal development. This is 3-hydroxyacyl-CoA dehydrogenase type-2 from Drosophila melanogaster (Fruit fly).